A 207-amino-acid polypeptide reads, in one-letter code: LexA repressor (207 aa).

The segment at residues 28–48 (VREIGEAVGLASSSTVHGHLA) is a DNA-binding region (H-T-H motif). Catalysis depends on for autocatalytic cleavage activity residues Ser129 and Lys167.

The protein belongs to the peptidase S24 family. As to quaternary structure, homodimer.

The enzyme catalyses Hydrolysis of Ala-|-Gly bond in repressor LexA.. Functionally, represses a number of genes involved in the response to DNA damage (SOS response), including recA and lexA. In the presence of single-stranded DNA, RecA interacts with LexA causing an autocatalytic cleavage which disrupts the DNA-binding part of LexA, leading to derepression of the SOS regulon and eventually DNA repair. The sequence is that of LexA repressor from Geobacillus kaustophilus (strain HTA426).